The following is a 247-amino-acid chain: Protein lin-28 homolog B (247 aa).

The tract at residues 1–22 is disordered; the sequence is MAEGGASKGEEPEKLPGLAEDE. Residues 27–100 form the CSD domain; sequence HGTGHCKWFN…GLESIRVTGP (74 aa). Phosphoserine occurs at positions 94, 103, and 108. The tract at residues 96 to 124 is disordered; sequence RVTGPGGSPCLGSERRPKGKTLQKRKPKG. Residues 112–123 show a composition bias toward basic residues; it reads PKGKTLQKRKPK. 2 CCHC-type zinc fingers span residues 125-142 and 147-164; these read DRCYNCGGLDHHAKECSL and KKCHYCQSIMHMVANCPH. The Zn(2+) site is built by C127, C130, H135, C140, C149, C152, H157, and C162. Positions 173 to 186 are enriched in polar residues; it reads SSQGRQEAESQPCS. The tract at residues 173 to 247 is disordered; that stretch reads SSQGRQEAES…GPLIQKRKKT (75 aa). Residues 207 to 219 show a composition bias toward basic and acidic residues; it reads VKSEMAEHSDRSP.

The protein belongs to the lin-28 family.

It localises to the nucleus. The protein resides in the nucleolus. Functionally, suppressor of microRNA (miRNA) biogenesis, including that of let-7 and possibly of miR107, miR-143 and miR-200c. Binds primary let-7 transcripts (pri-let-7), including pri-let-7g and pri-let-7a-1, and sequester them in the nucleolus, away from the microprocessor complex, hence preventing their processing into mature miRNA. Does not act on pri-miR21. The repression of let-7 expression is required for normal development and contributes to maintain the pluripotent state of embryonic stem cells by preventing let-7-mediated differentiation. When overexpressed, recruits ZCCHC11/TUT4 uridylyltransferase to pre-let-7 transcripts, leading to their terminal uridylation and degradation. This activity might not be relevant in vivo, as LIN28B-mediated inhibition of let-7 miRNA maturation appears to be ZCCHC11-independent. Interaction with target pre-miRNAs occurs via an 5'-GGAG-3' motif in the pre-miRNA terminal loop. Mediates MYC-induced let-7 repression. When overexpressed, may stimulate growth of carcinoma cell lines. This is Protein lin-28 homolog B (Lin28b) from Mus musculus (Mouse).